The sequence spans 529 residues: F-box/LRR-repeat protein At5g63520 (529 aa).

The interval 1–22 (MAEVSLTKKEMTTKGKSENSKK) is disordered. The F-box domain occupies 31-78 (VPIAAMNEDLLHNILLRLPAKSFAFASCVNRFWSSVCNRILSRPKMIS). LRR repeat units follow at residues 265–288 (GNEP…IFAR) and 418–441 (QVYL…LRNL).

This Arabidopsis thaliana (Mouse-ear cress) protein is F-box/LRR-repeat protein At5g63520.